Consider the following 350-residue polypeptide: Outer membrane porin PhoE (350 aa).

A signal peptide spans 1–21 (MKKSTLALVVMGVVASASVHA).

Belongs to the Gram-negative porin family. Homotrimer.

It is found in the cell outer membrane. In terms of biological role, uptake of inorganic phosphate, phosphorylated compounds, and some other negatively charged solutes. This is Outer membrane porin PhoE (phoE) from Enterobacter cloacae.